The sequence spans 487 residues: Putative sugar kinase YoaC (487 aa).

The protein belongs to the FGGY kinase family.

This Bacillus subtilis (strain 168) protein is Putative sugar kinase YoaC (yoaC).